A 200-amino-acid chain; its full sequence is Ras-related protein Rab-7b (200 aa).

GTP contacts are provided by residues 15 to 22, 34 to 40, 63 to 67, 124 to 127, and 154 to 155; these read GALGVGKT, YEDYQTT, DTGGQ, NKID, and AK. 2 short sequence motifs (switch) span residues 28-41 and 67-82; these read YVHK…QTTL and QERF…KGSD. Phosphoserine is present on S186. S-geranylgeranyl cysteine attachment occurs at residues C199 and C200.

The protein belongs to the small GTPase superfamily. Rab family.

Its subcellular location is the late endosome. It is found in the lysosome. The protein localises to the golgi apparatus. The protein resides in the trans-Golgi network. It localises to the cytoplasmic vesicle. Its subcellular location is the phagosome. It is found in the phagosome membrane. In terms of biological role, controls vesicular trafficking from endosomes to the trans-Golgi network (TGN). Acts as a negative regulator of TLR9 signaling and can suppress TLR9-triggered TNFA, IL6, and IFNB production in macrophages by promoting TLR9 lysosomal degradation. Also negatively regulates TLR4 signaling in macrophages by promoting lysosomal degradation of TLR4. Promotes megakaryocytic differentiation by increasing NF-kappa-B-dependent IL6 production and subsequently enhancing the association of STAT3 with GATA1. Not involved in the regulation of the EGF- and EGFR degradation pathway. This Bos taurus (Bovine) protein is Ras-related protein Rab-7b (RAB7B).